A 198-amino-acid polypeptide reads, in one-letter code: Penicillin-binding protein activator LpoB (198 aa).

The first 19 residues, 1–19, serve as a signal peptide directing secretion; it reads MIRSVNRTGALMMALILSG. The N-palmitoyl cysteine moiety is linked to residue cysteine 20. Cysteine 20 carries S-diacylglycerol cysteine lipidation. The segment covering 26–37 has biased composition (low complexity); the sequence is QPAPVEPTQPVE. The disordered stretch occupies residues 26 to 59; it reads QPAPVEPTQPVEPVQPVPQPEQPIPQPQPVPQPP. The segment covering 38–59 has biased composition (pro residues); it reads PVQPVPQPEQPIPQPQPVPQPP.

It belongs to the LpoB family. In terms of assembly, interacts with PBP1b.

It localises to the cell outer membrane. Regulator of peptidoglycan synthesis that is essential for the function of penicillin-binding protein 1B (PBP1b). The sequence is that of Penicillin-binding protein activator LpoB from Pantoea ananatis (strain LMG 20103).